A 126-amino-acid chain; its full sequence is Small ribosomal subunit protein uS13 (126 aa).

Residues 95–126 (GLPVRGQRTRTNARTRKGPRKTVAGKKKAPRK) are disordered.

The protein belongs to the universal ribosomal protein uS13 family. Part of the 30S ribosomal subunit. Forms a loose heterodimer with protein S19. Forms two bridges to the 50S subunit in the 70S ribosome.

In terms of biological role, located at the top of the head of the 30S subunit, it contacts several helices of the 16S rRNA. In the 70S ribosome it contacts the 23S rRNA (bridge B1a) and protein L5 of the 50S subunit (bridge B1b), connecting the 2 subunits; these bridges are implicated in subunit movement. Contacts the tRNAs in the A and P-sites. This is Small ribosomal subunit protein uS13 (rpsM) from Thermus thermophilus (strain ATCC BAA-163 / DSM 7039 / HB27).